A 256-amino-acid chain; its full sequence is Thiazole synthase (256 aa).

The active-site Schiff-base intermediate with DXP is the lysine 96. Residues glycine 157, 184–185 (AG), and 206–207 (NT) each bind 1-deoxy-D-xylulose 5-phosphate.

It belongs to the ThiG family. As to quaternary structure, homotetramer. Forms heterodimers with either ThiH or ThiS.

It is found in the cytoplasm. The enzyme catalyses [ThiS sulfur-carrier protein]-C-terminal-Gly-aminoethanethioate + 2-iminoacetate + 1-deoxy-D-xylulose 5-phosphate = [ThiS sulfur-carrier protein]-C-terminal Gly-Gly + 2-[(2R,5Z)-2-carboxy-4-methylthiazol-5(2H)-ylidene]ethyl phosphate + 2 H2O + H(+). It functions in the pathway cofactor biosynthesis; thiamine diphosphate biosynthesis. In terms of biological role, catalyzes the rearrangement of 1-deoxy-D-xylulose 5-phosphate (DXP) to produce the thiazole phosphate moiety of thiamine. Sulfur is provided by the thiocarboxylate moiety of the carrier protein ThiS. In vitro, sulfur can be provided by H(2)S. The protein is Thiazole synthase of Brucella abortus (strain S19).